We begin with the raw amino-acid sequence, 382 residues long: Histidinol-phosphate aminotransferase (382 aa).

The residue at position 215 (K215) is an N6-(pyridoxal phosphate)lysine. The interval 363-382 is disordered; the sequence is NIDNQSKTHSQTSSIRKGTI.

The protein belongs to the class-II pyridoxal-phosphate-dependent aminotransferase family. Histidinol-phosphate aminotransferase subfamily. In terms of assembly, homodimer. Pyridoxal 5'-phosphate is required as a cofactor.

It catalyses the reaction L-histidinol phosphate + 2-oxoglutarate = 3-(imidazol-4-yl)-2-oxopropyl phosphate + L-glutamate. The protein operates within amino-acid biosynthesis; L-histidine biosynthesis; L-histidine from 5-phospho-alpha-D-ribose 1-diphosphate: step 7/9. The polypeptide is Histidinol-phosphate aminotransferase (Yersinia pseudotuberculosis serotype O:3 (strain YPIII)).